We begin with the raw amino-acid sequence, 85 residues long: ATP synthase subunit c (85 aa).

The next 2 helical transmembrane spans lie at 10 to 30 and 65 to 85; these read GLALLGKYLGAGLCMGIGAIG and AVAETTGIYSLLIAFMILLVV.

It belongs to the ATPase C chain family. In terms of assembly, F-type ATPases have 2 components, F(1) - the catalytic core - and F(0) - the membrane proton channel. F(1) has five subunits: alpha(3), beta(3), gamma(1), delta(1), epsilon(1). F(0) has three main subunits: a(1), b(2) and c(10-14). The alpha and beta chains form an alternating ring which encloses part of the gamma chain. F(1) is attached to F(0) by a central stalk formed by the gamma and epsilon chains, while a peripheral stalk is formed by the delta and b chains.

It localises to the cell inner membrane. Functionally, f(1)F(0) ATP synthase produces ATP from ADP in the presence of a proton or sodium gradient. F-type ATPases consist of two structural domains, F(1) containing the extramembraneous catalytic core and F(0) containing the membrane proton channel, linked together by a central stalk and a peripheral stalk. During catalysis, ATP synthesis in the catalytic domain of F(1) is coupled via a rotary mechanism of the central stalk subunits to proton translocation. Key component of the F(0) channel; it plays a direct role in translocation across the membrane. A homomeric c-ring of between 10-14 subunits forms the central stalk rotor element with the F(1) delta and epsilon subunits. The polypeptide is ATP synthase subunit c (Thermotoga maritima (strain ATCC 43589 / DSM 3109 / JCM 10099 / NBRC 100826 / MSB8)).